Reading from the N-terminus, the 256-residue chain is GDSL esterase/lipase At1g18120 (256 aa).

A signal peptide spans 1–49 (MYRVYKNNKFILISIPRITNKLWQKNCNLVILLGVLLVLTLFHDPIIVA). The active-site Nucleophile is S67. N181 carries an N-linked (GlcNAc...) asparagine glycan.

The protein belongs to the 'GDSL' lipolytic enzyme family.

It is found in the secreted. This Arabidopsis thaliana (Mouse-ear cress) protein is GDSL esterase/lipase At1g18120.